A 275-amino-acid chain; its full sequence is Peptidoglycan-N-acetylglucosamine deacetylase BC_1960 (275 aa).

The NodB homology domain maps to 81–262; sequence AEVALTFDDG…QLKTKGARFV (182 aa). The active-site Proton acceptor is the Asp88. Zn(2+)-binding residues include Asp89, His139, and His143. Residue Pro179 is modified to 2-hydroxyproline; partial. Residue His233 is the Proton donor of the active site.

Belongs to the polysaccharide deacetylase family. The cofactor is Zn(2+). In terms of processing, hydroxylated on Pro-179. Hydroxylation alters the active site and enhances significantly deacetylase activity, probably by creating a more favorable environment for transition-state stabilization. It might be autocatalytic.

It catalyses the reaction peptidoglycan-N-acetyl-D-glucosamine + H2O = peptidoglycan-D-glucosamine + acetate.. With respect to regulation, deacetylase activity is stimulated by hydroxylation on Pro-179. Inhibited by CuCl(2) and ZnCl(2). Inhibited by the hydroxamate N-hydroxy-4-(naphthalene-1-yl)benzamide (NHNB). Catalyzes the deacetylation of N-acetylglucosamine (GlcNAc) residues in peptidoglycan. Also acts on soluble chitin substrates and N-acetylchitooligomers. Acts on cell wall peptidoglycan from the Gram-positive bacteria B.cereus and B.subtilis and the Gram-negative bacterium H.pylori. Not active on acetylated xylan. The protein is Peptidoglycan-N-acetylglucosamine deacetylase BC_1960 of Bacillus cereus (strain ATCC 14579 / DSM 31 / CCUG 7414 / JCM 2152 / NBRC 15305 / NCIMB 9373 / NCTC 2599 / NRRL B-3711).